Reading from the N-terminus, the 433-residue chain is D-amino acid dehydrogenase (433 aa).

Position 3 to 17 (Val-3 to Tyr-17) interacts with FAD.

The protein belongs to the DadA oxidoreductase family. FAD serves as cofactor.

The enzyme catalyses a D-alpha-amino acid + A + H2O = a 2-oxocarboxylate + AH2 + NH4(+). It participates in amino-acid degradation; D-alanine degradation; NH(3) and pyruvate from D-alanine: step 1/1. In terms of biological role, oxidative deamination of D-amino acids. This Pseudomonas syringae pv. syringae (strain B728a) protein is D-amino acid dehydrogenase.